Reading from the N-terminus, the 81-residue chain is MAGSTGERPFSDIVTSIRYWVIHSITIPMLFIAGWLFVSTGLAYDTFGTPRPDQYFTETRQEIPIVTDRYKAIDQINEFNN.

A helical transmembrane segment spans residues 21 to 35 (VIHSITIPMLFIAGW). H23 provides a ligand contact to heme.

Belongs to the PsbE/PsbF family. In terms of assembly, heterodimer of an alpha subunit and a beta subunit. PSII is composed of 1 copy each of membrane proteins PsbA, PsbB, PsbC, PsbD, PsbE, PsbF, PsbH, PsbI, PsbJ, PsbK, PsbL, PsbM, PsbT, PsbX, PsbY, PsbZ, Psb30/Ycf12, peripheral proteins PsbO, CyanoQ (PsbQ), PsbU, PsbV and a large number of cofactors. It forms dimeric complexes. The cofactor is heme b.

The protein resides in the cellular thylakoid membrane. Functionally, this b-type cytochrome is tightly associated with the reaction center of photosystem II (PSII). PSII is a light-driven water:plastoquinone oxidoreductase that uses light energy to abstract electrons from H(2)O, generating O(2) and a proton gradient subsequently used for ATP formation. It consists of a core antenna complex that captures photons, and an electron transfer chain that converts photonic excitation into a charge separation. The polypeptide is Cytochrome b559 subunit alpha (Picosynechococcus sp. (strain ATCC 27264 / PCC 7002 / PR-6) (Agmenellum quadruplicatum)).